The chain runs to 146 residues: MKNEMNIQFTALSQNESFARVTVAAFIAQLDPTMDELTEIKTVVSEAVTNAIIHGYENSGQGNVYISVTLEDHIVYLTIRDEGVGIPNLEEARQPLFTTKPELERSGMGFTIMENFMDDISIDSSPEMGTTIHLTKHLSKSKALCN.

Belongs to the anti-sigma-factor family.

The enzyme catalyses L-seryl-[protein] + ATP = O-phospho-L-seryl-[protein] + ADP + H(+). It carries out the reaction L-threonyl-[protein] + ATP = O-phospho-L-threonyl-[protein] + ADP + H(+). In terms of biological role, binds to sigma F and blocks its ability to form an RNA polymerase holoenzyme (E-sigma F). Phosphorylates SpoIIAA on a serine residue. This phosphorylation may enable SpoIIAA to act as an anti-anti-sigma factor that counteracts SpoIIAB and thus releases sigma F from inhibition. In Bacillus licheniformis (strain ATCC 14580 / DSM 13 / JCM 2505 / CCUG 7422 / NBRC 12200 / NCIMB 9375 / NCTC 10341 / NRRL NRS-1264 / Gibson 46), this protein is Anti-sigma F factor.